Here is a 349-residue protein sequence, read N- to C-terminus: Hypoxia-inducible factor 1-alpha inhibitor (349 aa).

The span at 1 to 14 shows a compositional bias: low complexity; sequence MAATAAEVAASGSG. Residues 1–51 are disordered; it reads MAATAAEVAASGSGEAREEAEAPGPAWDESQLRSYSFPTRPIPRLSQSDPR. Ala2 bears the N-acetylalanine mark. The tract at residues 2 to 125 is interaction with VHL; the sequence is AATAAEVAAS…PRSNREEIKF (124 aa). The 166-residue stretch at 142 to 307 folds into the JmjC domain; that stretch reads ERLYLQQTLN…KGAPTPKRIE (166 aa). Residue Tyr145 coordinates 2-oxoglutarate. Residues Asp152 and 181–183 contribute to the substrate site; that span reads QLT. 2-oxoglutarate is bound at residue Thr196. Residues His199 and Asp201 each contribute to the Fe cation site. Residue 201–203 coordinates substrate; the sequence is DEQ. The 2-oxoglutarate site is built by Asn205 and Lys214. 238–239 is a binding site for substrate; sequence RQ. His279 lines the Fe cation pocket. Asn294 is a binding site for 2-oxoglutarate. Substrate is bound by residues Ala300 and Asn321.

In terms of assembly, homodimer; homodimerization is essential for catalytic activity. Interacts with VHL and HIF1A. Part of a complex with VHL, HIF1A and HDAC1 or HDAC2 or HDAC3. Interacts with NFKB1 and NFKBIA. Interacts with NOTCH1, NOTCH2 and NOTCH3 but not with NOTCH4. Interacts with ABPA3. Interacts with TNKS2. Interacts with PPP1R12A. Interacts with UBE3A. Interacts with ASB4. Interacts with ANKS3. Interacts with NECAB3; the interaction is indirect and seems to be mediated by APBA3. The cofactor is Fe(2+).

The protein localises to the nucleus. It is found in the cytoplasm. It localises to the perinuclear region. It carries out the reaction L-asparaginyl-[hypoxia-inducible factor alpha subunit] + 2-oxoglutarate + O2 = (3S)-3-hydroxy-L-asparaginyl-[hypoxia-inducible factor alpha subunit] + succinate + CO2. The catalysed reaction is L-histidyl-[ankyrin-repeat domain protein] + 2-oxoglutarate + O2 = (3S)-3-hydroxy-L-histidyl-[ankyrin-repeat domain protein] + succinate + CO2. The enzyme catalyses L-asparaginyl-[ankyrin-repeat domain protein] + 2-oxoglutarate + O2 = (3S)-3-hydroxy-L-asparaginyl-[ankyrin-repeat domain protein] + succinate + CO2. It catalyses the reaction L-aspartyl-[ankyrin-repeat domain protein] + 2-oxoglutarate + O2 = (3S)-3-hydroxy-L-aspartyl-[ankyrin-repeat domain protein] + succinate + CO2. Functionally, hydroxylates HIF-1 alpha at 'Asn-799' in the C-terminal transactivation domain (CAD). Functions as an oxygen sensor and, under normoxic conditions, the hydroxylation prevents interaction of HIF-1 with transcriptional coactivators including Cbp/p300-interacting transactivator. Involved in transcriptional repression through interaction with HIF1A, VHL and histone deacetylases. Hydroxylates specific Asn residues within ankyrin repeat domains (ARD) of NFKB1, NFKBIA, NOTCH1, ASB4, PPP1R12A and several other ARD-containing proteins. Also hydroxylates Asp and His residues within ARDs of ANK1 and TNKS2, respectively. Negatively regulates NOTCH1 activity, accelerating myogenic differentiation. Positively regulates ASB4 activity, promoting vascular differentiation. This chain is Hypoxia-inducible factor 1-alpha inhibitor (Hif1an), found in Mus musculus (Mouse).